Consider the following 323-residue polypeptide: HPr kinase/phosphorylase (323 aa).

Active-site residues include His-146 and Lys-167. Residue Gly-161–Ser-168 participates in ATP binding. Ser-168 provides a ligand contact to Mg(2+). The Proton acceptor; for phosphorylation activity. Proton donor; for dephosphorylation activity role is filled by Asp-185. Positions Leu-209–Asp-218 are important for the catalytic mechanism of both phosphorylation and dephosphorylation. Glu-210 contributes to the Mg(2+) binding site. Arg-250 is an active-site residue. Positions Gln-271–Arg-276 are important for the catalytic mechanism of dephosphorylation.

It belongs to the HPrK/P family. Homohexamer. Requires Mg(2+) as cofactor.

It catalyses the reaction [HPr protein]-L-serine + ATP = [HPr protein]-O-phospho-L-serine + ADP + H(+). The enzyme catalyses [HPr protein]-O-phospho-L-serine + phosphate + H(+) = [HPr protein]-L-serine + diphosphate. Its function is as follows. Catalyzes the ATP- as well as the pyrophosphate-dependent phosphorylation of a specific serine residue in HPr, a phosphocarrier protein of the phosphoenolpyruvate-dependent sugar phosphotransferase system (PTS). HprK/P also catalyzes the pyrophosphate-producing, inorganic phosphate-dependent dephosphorylation (phosphorolysis) of seryl-phosphorylated HPr (P-Ser-HPr). The protein is HPr kinase/phosphorylase of Cupriavidus metallidurans (strain ATCC 43123 / DSM 2839 / NBRC 102507 / CH34) (Ralstonia metallidurans).